A 119-amino-acid chain; its full sequence is MARVKRGVQARRRHKKILSLAKGYYNARRKVFRVAKQAVIKAQQYAYIGRKQKKRNFRSLWIVRINAAARINGLSYSRFMNGILKCGITLDRKMLADIAVHDPAGFTALAEKAKSMLAA.

This sequence belongs to the bacterial ribosomal protein bL20 family.

Its function is as follows. Binds directly to 23S ribosomal RNA and is necessary for the in vitro assembly process of the 50S ribosomal subunit. It is not involved in the protein synthesizing functions of that subunit. This is Large ribosomal subunit protein bL20 from Xylella fastidiosa (strain M12).